Reading from the N-terminus, the 164-residue chain is Pleckstrin homology domain-containing family J member 1 (164 aa).

One can recognise a PH domain in the interval 15-108; the sequence is PAEMAAELGM…WMEALQRASY (94 aa).

This is Pleckstrin homology domain-containing family J member 1 (Plekhj1) from Mus musculus (Mouse).